Consider the following 34-residue polypeptide: U4-theraphotoxin-Hs1a (34 aa).

3 cysteine pairs are disulfide-bonded: Cys-3–Cys-17, Cys-10–Cys-22, and Cys-16–Cys-33.

Belongs to the neurotoxin 14 (magi-1) family. 05 (ICK-7) subfamily. In terms of tissue distribution, expressed by the venom gland.

The protein resides in the secreted. In terms of biological role, intracisternal injection paralyzes mice. The chain is U4-theraphotoxin-Hs1a from Cyriopagopus schmidti (Chinese bird spider).